Consider the following 411-residue polypeptide: LL-diaminopimelate aminotransferase (411 aa).

Tyr15 and Gly42 together coordinate substrate. Residues Tyr72, 108 to 109 (SK), Tyr132, Asn187, Tyr218, and 246 to 248 (SFS) each bind pyridoxal 5'-phosphate. 3 residues coordinate substrate: Lys109, Tyr132, and Asn187. An N6-(pyridoxal phosphate)lysine modification is found at Lys249. Pyridoxal 5'-phosphate is bound by residues Arg257 and Asn292. 2 residues coordinate substrate: Asn292 and Arg388.

The protein belongs to the class-I pyridoxal-phosphate-dependent aminotransferase family. LL-diaminopimelate aminotransferase subfamily. Homodimer. Requires pyridoxal 5'-phosphate as cofactor.

It carries out the reaction (2S,6S)-2,6-diaminopimelate + 2-oxoglutarate = (S)-2,3,4,5-tetrahydrodipicolinate + L-glutamate + H2O + H(+). It functions in the pathway amino-acid biosynthesis; L-lysine biosynthesis via DAP pathway; LL-2,6-diaminopimelate from (S)-tetrahydrodipicolinate (aminotransferase route): step 1/1. Its function is as follows. Involved in the synthesis of meso-diaminopimelate (m-DAP or DL-DAP), required for both lysine and peptidoglycan biosynthesis. Catalyzes the direct conversion of tetrahydrodipicolinate to LL-diaminopimelate. The protein is LL-diaminopimelate aminotransferase of Citrifermentans bemidjiense (strain ATCC BAA-1014 / DSM 16622 / JCM 12645 / Bem) (Geobacter bemidjiensis).